The chain runs to 183 residues: Mitochondrial inner membrane protease subunit 2 (183 aa).

A helical membrane pass occupies residues 13-35 (AFVSGFFVAVPVTVTVLDRLAYV). Residues Ser-42 and Lys-90 contribute to the active site. The segment at 161–183 (SVPPDRRPLLNWDRAAEDKYDDD) is disordered. A compositionally biased stretch (basic and acidic residues) spans 164 to 183 (PDRRPLLNWDRAAEDKYDDD).

Belongs to the peptidase S26 family. IMP2 subfamily. Heterodimer of 2 subunits, IMMPL1 and IMMPL2.

Its subcellular location is the mitochondrion inner membrane. Functionally, catalyzes the removal of transit peptides required for the targeting of proteins from the mitochondrial matrix, across the inner membrane, into the inter-membrane space. This Danio rerio (Zebrafish) protein is Mitochondrial inner membrane protease subunit 2 (immp2l).